Here is a 266-residue protein sequence, read N- to C-terminus: Small ribosomal subunit protein eS1 (266 aa).

Residues 233-266 (GEGGGSSAAKPSGDDTGAKVDRADGYEPPIQETV) form a disordered region. Residues 244-257 (SGDDTGAKVDRADG) show a composition bias toward basic and acidic residues.

This sequence belongs to the eukaryotic ribosomal protein eS1 family. In terms of assembly, component of the small ribosomal subunit. Mature ribosomes consist of a small (40S) and a large (60S) subunit. The 40S subunit contains about 33 different proteins and 1 molecule of RNA (18S). The 60S subunit contains about 49 different proteins and 3 molecules of RNA (28S, 5.8S and 5S). Part of the small subunit (SSU) processome, composed of more than 70 proteins and the RNA chaperone small nucleolar RNA (snoRNA) U3.

Its subcellular location is the cytoplasm. The protein localises to the nucleus. It localises to the nucleolus. Its function is as follows. Component of the small ribosomal subunit. The ribosome is a large ribonucleoprotein complex responsible for the synthesis of proteins in the cell. Part of the small subunit (SSU) processome, first precursor of the small eukaryotic ribosomal subunit. During the assembly of the SSU processome in the nucleolus, many ribosome biogenesis factors, an RNA chaperone and ribosomal proteins associate with the nascent pre-rRNA and work in concert to generate RNA folding, modifications, rearrangements and cleavage as well as targeted degradation of pre-ribosomal RNA by the RNA exosome. May play a role during erythropoiesis. This Salmo salar (Atlantic salmon) protein is Small ribosomal subunit protein eS1 (rps3a).